The chain runs to 798 residues: Pentatricopeptide repeat-containing protein At5g67570, chloroplastic (798 aa).

Disordered stretches follow at residues 1–21 (MDASVVRFSQSPARVPPEFEP) and 50–73 (IQKHNRRTKRETESEAEVYTEAQK). PPR repeat units follow at residues 254–284 (SRFVYTKLLSVLGFARRPQEALQIFNQMLGD), 290–324 (DMAAYHCIAVTLGQAGLLKELLKVIERMRQKPTKL), 340–374 (DLVVYNAILNACVPTLQWKAVSWVFVELRKNGLRP), 375–409 (NGATYGLAMEVMLESGKFDRVHDFFRKMKSSGEAP), 410–444 (KAITYKVLVRALWREGKIEEAVEAVRDMEQKGVIG), 445–480 (TGSVYYELACCLCNNGRWCDAMLEVGRMKRLENCRP), 481–511 (LEITFTGLIAASLNGGHVDDCMAIFQYMKDK), 515–545 (NIGTANMMLKVYGRNDMFSEAKELFEEIVSR), 553–587 (NEYTYSFMLEASARSLQWEYFEHVYQTMVLSGYQM), and 588–622 (DQTKHASMLIEASRAGKWSLLEHAFDAVLEDGEIP).

It belongs to the PPR family. P subfamily. Interacts (via C-terminus) with SIGF (via N-terminus).

Its subcellular location is the plastid. The protein resides in the chloroplast. Involved in the regulation of early chloroplast development and chloroplast gene expression in a SIGF-dependent manner. This chain is Pentatricopeptide repeat-containing protein At5g67570, chloroplastic (DG1), found in Arabidopsis thaliana (Mouse-ear cress).